The primary structure comprises 595 residues: Arginine--tRNA ligase (595 aa).

Residues 132 to 142 (ANPTGPLHVGH) carry the 'HIGH' region motif.

It belongs to the class-I aminoacyl-tRNA synthetase family. In terms of assembly, monomer.

It localises to the cytoplasm. The catalysed reaction is tRNA(Arg) + L-arginine + ATP = L-arginyl-tRNA(Arg) + AMP + diphosphate. This is Arginine--tRNA ligase from Cupriavidus necator (strain ATCC 17699 / DSM 428 / KCTC 22496 / NCIMB 10442 / H16 / Stanier 337) (Ralstonia eutropha).